Consider the following 285-residue polypeptide: (3S)-malyl-CoA thioesterase (285 aa).

Arginine 70 and glutamate 122 together coordinate substrate. Residues glutamate 122 and aspartate 148 each coordinate Mg(2+).

The protein belongs to the HpcH/HpaI aldolase family. Homodimer or homotrimer. Mg(2+) is required as a cofactor.

The catalysed reaction is (S)-malyl-CoA + H2O = (S)-malate + CoA + H(+). Reversibly inhibited by EDTA. Stimulated by the divalent cations Mg(2+) and Mn(2+). Its function is as follows. Catalyzes the hydrolysis of (3S)-malyl-CoA to (3S)-malate and free CoA. Inactive towards beta-methylmalyl-CoA and other CoA esters. The protein is (3S)-malyl-CoA thioesterase of Cereibacter sphaeroides (strain ATCC 17023 / DSM 158 / JCM 6121 / CCUG 31486 / LMG 2827 / NBRC 12203 / NCIMB 8253 / ATH 2.4.1.) (Rhodobacter sphaeroides).